A 417-amino-acid polypeptide reads, in one-letter code: NADH-quinone oxidoreductase subunit D (417 aa).

This sequence belongs to the complex I 49 kDa subunit family. As to quaternary structure, NDH-1 is composed of 14 different subunits. Subunits NuoB, C, D, E, F, and G constitute the peripheral sector of the complex.

Its subcellular location is the cell inner membrane. It catalyses the reaction a quinone + NADH + 5 H(+)(in) = a quinol + NAD(+) + 4 H(+)(out). In terms of biological role, NDH-1 shuttles electrons from NADH, via FMN and iron-sulfur (Fe-S) centers, to quinones in the respiratory chain. The immediate electron acceptor for the enzyme in this species is believed to be ubiquinone. Couples the redox reaction to proton translocation (for every two electrons transferred, four hydrogen ions are translocated across the cytoplasmic membrane), and thus conserves the redox energy in a proton gradient. The chain is NADH-quinone oxidoreductase subunit D from Methylibium petroleiphilum (strain ATCC BAA-1232 / LMG 22953 / PM1).